Consider the following 190-residue polypeptide: Class III hydrophobin F (190 aa).

The first 18 residues, 1-18 (MRPITILCTLATLSTTLA), serve as a signal peptide directing secretion. Cystine bridges form between Cys54–Cys115, Cys62–Cys109, Cys63–Cys97, and Cys116–Cys131.

This sequence belongs to the fungal hydrophobin family. As to quaternary structure, self-assembles to form functional amyloid fibrils called rodlets. Self-assembly into fibrillar rodlets occurs spontaneously at hydrophobic:hydrophilic interfaces and the rodlets further associate laterally to form amphipathic monolayers.

It is found in the secreted. The protein localises to the cell wall. Aerial growth, conidiation, and dispersal of filamentous fungi in the environment rely upon a capability of their secreting small amphipathic proteins called hydrophobins (HPBs) with low sequence identity. Class I can self-assemble into an outermost layer of rodlet bundles on aerial cell surfaces, conferring cellular hydrophobicity that supports fungal growth, development and dispersal; whereas Class II form highly ordered films at water-air interfaces through intermolecular interactions but contribute nothing to the rodlet structure. RodF and rodG belong to Class III, which contains hydrophobins with intermediate (between classes I and II) or atypical characteristics. RodF, unlike rodA, is not required for rodlet formation. The polypeptide is Class III hydrophobin F (Aspergillus fumigatus (strain ATCC MYA-4609 / CBS 101355 / FGSC A1100 / Af293) (Neosartorya fumigata)).